A 135-amino-acid chain; its full sequence is Hydroxylaminobenzene mutase HabA (135 aa).

The next 4 membrane-spanning stretches (helical) occupy residues 5–25, 33–55, 67–87, and 113–133; these read LFASGLVLFLLGLVTGLLVPV, VAGHLQGMTNGPLLIIAGLLWPY, FWLLIYGTYANWLGVQLAALW, and FLLFSLIPAMFAAPIILLIGI.

It is found in the cell membrane. The catalysed reaction is N-phenylhydroxylamine = 2-aminophenol. Its function is as follows. Catalyzes the rearrangement of hydroxylaminobenzene to 2-aminophenol. Involved in the degradation of nitrobenzene. The sequence is that of Hydroxylaminobenzene mutase HabA (habA) from Ectopseudomonas oleovorans (Pseudomonas oleovorans).